The sequence spans 305 residues: MEIKDGFIAINKEKGFTSHDCVKQIRKLLGIKKVGHTGTLDPDVTGTLPIAIGSATRFIQYLPQGKTYIGQIQLGIRTKTDDMQGEILNKKDWPVLSHKQLDKYLNNFRGIIQQVPPIVSSVHVNGERAYKKAFKNEEFELKPKEVEIEELVLNKWDQINGILEIKVSCSSGTYIRSIARDLGGSLDSEGCLLKLKRISACGFHEKNSIKISDLSDNNDKNAPFIIPTISALDHISTLVLANQEEINFWQTGRIIKFDANNFVKSRSFDYKKPIKIIDPNKILLGIGFINEEKTILHPKLVLNAK.

The Nucleophile role is filled by Asp-41.

It belongs to the pseudouridine synthase TruB family. Type 1 subfamily.

The catalysed reaction is uridine(55) in tRNA = pseudouridine(55) in tRNA. Functionally, responsible for synthesis of pseudouridine from uracil-55 in the psi GC loop of transfer RNAs. The polypeptide is tRNA pseudouridine synthase B (Prochlorococcus marinus subsp. pastoris (strain CCMP1986 / NIES-2087 / MED4)).